Here is a 258-residue protein sequence, read N- to C-terminus: Large ribosomal subunit protein eL8z (258 aa).

The segment at 1-20 (MAPKRGGRAPVPAKKKTEKV) is disordered.

It belongs to the eukaryotic ribosomal protein eL8 family.

This Oryza sativa subsp. japonica (Rice) protein is Large ribosomal subunit protein eL8z (RPL7A-1).